A 156-amino-acid chain; its full sequence is Endoribonuclease YbeY (156 aa).

The Zn(2+) site is built by His-122, His-126, and His-132.

The protein belongs to the endoribonuclease YbeY family. Requires Zn(2+) as cofactor.

It is found in the cytoplasm. Single strand-specific metallo-endoribonuclease involved in late-stage 70S ribosome quality control and in maturation of the 3' terminus of the 16S rRNA. The polypeptide is Endoribonuclease YbeY (Geobacillus kaustophilus (strain HTA426)).